A 230-amino-acid chain; its full sequence is Ribose-5-phosphate isomerase A (230 aa).

Substrate-binding positions include 31–34 (TGST), 88–91 (DGSD), and 101–104 (KGGG). The active-site Proton acceptor is the Glu-110. Residue Lys-128 coordinates substrate.

The protein belongs to the ribose 5-phosphate isomerase family. As to quaternary structure, homodimer.

The catalysed reaction is aldehydo-D-ribose 5-phosphate = D-ribulose 5-phosphate. Its pathway is carbohydrate degradation; pentose phosphate pathway; D-ribose 5-phosphate from D-ribulose 5-phosphate (non-oxidative stage): step 1/1. Catalyzes the reversible conversion of ribose-5-phosphate to ribulose 5-phosphate. The polypeptide is Ribose-5-phosphate isomerase A (Lactobacillus helveticus (strain DPC 4571)).